We begin with the raw amino-acid sequence, 300 residues long: Sulfate adenylyltransferase subunit 2 (300 aa).

The protein belongs to the PAPS reductase family. CysD subfamily. Heterodimer composed of CysD, the smaller subunit, and CysN.

The enzyme catalyses sulfate + ATP + H(+) = adenosine 5'-phosphosulfate + diphosphate. The protein operates within sulfur metabolism; hydrogen sulfide biosynthesis; sulfite from sulfate: step 1/3. With CysN forms the ATP sulfurylase (ATPS) that catalyzes the adenylation of sulfate producing adenosine 5'-phosphosulfate (APS) and diphosphate, the first enzymatic step in sulfur assimilation pathway. APS synthesis involves the formation of a high-energy phosphoric-sulfuric acid anhydride bond driven by GTP hydrolysis by CysN coupled to ATP hydrolysis by CysD. This Magnetococcus marinus (strain ATCC BAA-1437 / JCM 17883 / MC-1) protein is Sulfate adenylyltransferase subunit 2.